The sequence spans 845 residues: Beta-galactosidase 11 (845 aa).

An N-terminal signal peptide occupies residues 1 to 26 (MRKHSLDRWLLTAVLVVLLSSSSSFA). Asn-104 carries an N-linked (GlcNAc...) asparagine glycan. Glu-197 functions as the Proton donor in the catalytic mechanism. Glu-268 functions as the Nucleophile in the catalytic mechanism. N-linked (GlcNAc...) asparagine glycans are attached at residues Asn-269, Asn-300, Asn-395, Asn-752, Asn-784, and Asn-814. Residues 751–840 (DNVSLTATLK…KMLAVQVKCG (90 aa)) form the SUEL-type lectin domain.

It belongs to the glycosyl hydrolase 35 family.

The protein resides in the secreted. Its subcellular location is the extracellular space. It is found in the apoplast. The catalysed reaction is Hydrolysis of terminal non-reducing beta-D-galactose residues in beta-D-galactosides.. The protein is Beta-galactosidase 11 (BGAL11) of Arabidopsis thaliana (Mouse-ear cress).